A 123-amino-acid chain; its full sequence is Small ribosomal subunit protein uS12 (123 aa).

3-methylthioaspartic acid is present on D89.

Belongs to the universal ribosomal protein uS12 family. Part of the 30S ribosomal subunit. Contacts proteins S8 and S17. May interact with IF1 in the 30S initiation complex.

With S4 and S5 plays an important role in translational accuracy. Its function is as follows. Interacts with and stabilizes bases of the 16S rRNA that are involved in tRNA selection in the A site and with the mRNA backbone. Located at the interface of the 30S and 50S subunits, it traverses the body of the 30S subunit contacting proteins on the other side and probably holding the rRNA structure together. The combined cluster of proteins S8, S12 and S17 appears to hold together the shoulder and platform of the 30S subunit. This is Small ribosomal subunit protein uS12 from Syntrophus aciditrophicus (strain SB).